The sequence spans 105 residues: Heat shock protein HspQ (105 aa).

Belongs to the HspQ family.

The protein localises to the cytoplasm. Involved in the degradation of certain denaturated proteins, including DnaA, during heat shock stress. This chain is Heat shock protein HspQ, found in Klebsiella pneumoniae (strain 342).